A 20-amino-acid polypeptide reads, in one-letter code: Alpha-basrubrin (20 aa).

A compositionally biased stretch (basic and acidic residues) spans 1 to 13 (GADFQECMKEHSQ). Residues 1–20 (GADFQECMKEHSQKQHQHQG) form a disordered region.

Possesses antifungal activity against B.cinerea, M.arachidicola and F.oxysporum but not C.comatus and R.solani. Inhibits HIV-1 reverse transcriptase and cell-free translation. This chain is Alpha-basrubrin, found in Basella alba (Malabar spinach).